Reading from the N-terminus, the 445-residue chain is Tubulin beta-2A chain (445 aa).

An MREI motif motif is present at residues 1–4 (MREI). Residue glutamine 11 participates in GTP binding. Phosphoserine is present on serine 40. Lysine 58 carries the post-translational modification N6-acetyllysine; alternate. Position 58 is an N6-succinyllysine; alternate (lysine 58). A Glycyl lysine isopeptide (Lys-Gly) (interchain with G-Cter in ubiquitin); alternate cross-link involves residue lysine 58. Glutamate 69, serine 138, glycine 142, threonine 143, and glycine 144 together coordinate GTP. Glutamate 69 lines the Mg(2+) pocket. Serine 172 is subject to Phosphoserine; by CDK1. Asparagine 204 and asparagine 226 together coordinate GTP. Phosphothreonine occurs at positions 285 and 290. Arginine 318 carries the post-translational modification Omega-N-methylarginine. A Glycyl lysine isopeptide (Lys-Gly) (interchain with G-Cter in ubiquitin) cross-link involves residue lysine 324. Residues 422–445 (YQQYQDATADEQGEFEEEEGEDEA) form a disordered region. Acidic residues predominate over residues 429–445 (TADEQGEFEEEEGEDEA). Glutamate 438 carries the post-translational modification 5-glutamyl polyglutamate.

This sequence belongs to the tubulin family. As to quaternary structure, interacts with ZNRF1. Part of a complex composed at least of ASH2L, EMSY, HCFC1, HSPA8, CCAR2, MATR3, MKI67, RBBP5, TUBB2A, WDR5 and ZNF335; this complex may have a histone H3-specific methyltransferase activity. Dimer of alpha and beta chains. A typical microtubule is a hollow water-filled tube with an outer diameter of 25 nm and an inner diameter of 15 nM. Alpha-beta heterodimers associate head-to-tail to form protofilaments running lengthwise along the microtubule wall with the beta-tubulin subunit facing the microtubule plus end conferring a structural polarity. Microtubules usually have 13 protofilaments but different protofilament numbers can be found in some organisms and specialized cells. It depends on Mg(2+) as a cofactor. Post-translationally, some glutamate residues at the C-terminus are polyglutamylated, resulting in polyglutamate chains on the gamma-carboxyl group. Polyglutamylation plays a key role in microtubule severing by spastin (SPAST). SPAST preferentially recognizes and acts on microtubules decorated with short polyglutamate tails: severing activity by SPAST increases as the number of glutamates per tubulin rises from one to eight, but decreases beyond this glutamylation threshold. Glutamylation is also involved in cilia motility. In terms of processing, some glutamate residues at the C-terminus are monoglycylated but not polyglycylated due to the absence of functional TTLL10 in human. Monoglycylation is mainly limited to tubulin incorporated into cilia and flagella axonemes, which is required for their stability and maintenance. Flagella glycylation controls sperm motility. Both polyglutamylation and monoglycylation can coexist on the same protein on adjacent residues, and lowering glycylation levels increases polyglutamylation, and reciprocally. Phosphorylated on Ser-172 by CDK1 during the cell cycle, from metaphase to telophase, but not in interphase. This phosphorylation inhibits tubulin incorporation into microtubules. As to expression, high expression in brain, where it represents 30% of all beta-tubulins.

Its subcellular location is the cytoplasm. The protein localises to the cytoskeleton. Functionally, tubulin is the major constituent of microtubules, a cylinder consisting of laterally associated linear protofilaments composed of alpha- and beta-tubulin heterodimers. Microtubules grow by the addition of GTP-tubulin dimers to the microtubule end, where a stabilizing cap forms. Below the cap, tubulin dimers are in GDP-bound state, owing to GTPase activity of alpha-tubulin. This Homo sapiens (Human) protein is Tubulin beta-2A chain (TUBB2A).